A 258-amino-acid polypeptide reads, in one-letter code: Imidazole glycerol phosphate synthase subunit HisF (258 aa).

Catalysis depends on residues D11 and D130.

This sequence belongs to the HisA/HisF family. In terms of assembly, heterodimer of HisH and HisF.

It is found in the cytoplasm. The enzyme catalyses 5-[(5-phospho-1-deoxy-D-ribulos-1-ylimino)methylamino]-1-(5-phospho-beta-D-ribosyl)imidazole-4-carboxamide + L-glutamine = D-erythro-1-(imidazol-4-yl)glycerol 3-phosphate + 5-amino-1-(5-phospho-beta-D-ribosyl)imidazole-4-carboxamide + L-glutamate + H(+). Its pathway is amino-acid biosynthesis; L-histidine biosynthesis; L-histidine from 5-phospho-alpha-D-ribose 1-diphosphate: step 5/9. In terms of biological role, IGPS catalyzes the conversion of PRFAR and glutamine to IGP, AICAR and glutamate. The HisF subunit catalyzes the cyclization activity that produces IGP and AICAR from PRFAR using the ammonia provided by the HisH subunit. The chain is Imidazole glycerol phosphate synthase subunit HisF from Serratia proteamaculans (strain 568).